We begin with the raw amino-acid sequence, 387 residues long: Succinate--CoA ligase [ADP-forming] subunit beta (387 aa).

Residues 9–236 (KELFAKHNVP…RDATDPLELK (228 aa)) form the ATP-grasp domain. ATP-binding positions include Lys-45, 52-54 (GRG), Ser-94, and Glu-99. Asn-191 and Asp-205 together coordinate Mg(2+). Residues Asn-256 and 318–320 (GIT) each bind substrate.

This sequence belongs to the succinate/malate CoA ligase beta subunit family. Heterotetramer of two alpha and two beta subunits. It depends on Mg(2+) as a cofactor.

The catalysed reaction is succinate + ATP + CoA = succinyl-CoA + ADP + phosphate. The enzyme catalyses GTP + succinate + CoA = succinyl-CoA + GDP + phosphate. It participates in carbohydrate metabolism; tricarboxylic acid cycle; succinate from succinyl-CoA (ligase route): step 1/1. Its function is as follows. Succinyl-CoA synthetase functions in the citric acid cycle (TCA), coupling the hydrolysis of succinyl-CoA to the synthesis of either ATP or GTP and thus represents the only step of substrate-level phosphorylation in the TCA. The beta subunit provides nucleotide specificity of the enzyme and binds the substrate succinate, while the binding sites for coenzyme A and phosphate are found in the alpha subunit. The chain is Succinate--CoA ligase [ADP-forming] subunit beta from Mycobacterium sp. (strain JLS).